The chain runs to 520 residues: 2-isopropylmalate synthase (520 aa).

Residues 12 to 274 form the Pyruvate carboxyltransferase domain; sequence VVIFDTTLRD…DTGIDTTMLT (263 aa). D21, H209, H211, and N245 together coordinate Mn(2+). The regulatory domain stretch occupies residues 398-520; that stretch reads KLLSLSVIAG…RLHAQHAAVV (123 aa).

Belongs to the alpha-IPM synthase/homocitrate synthase family. LeuA type 1 subfamily. In terms of assembly, homodimer. Mn(2+) serves as cofactor.

The protein resides in the cytoplasm. It catalyses the reaction 3-methyl-2-oxobutanoate + acetyl-CoA + H2O = (2S)-2-isopropylmalate + CoA + H(+). It functions in the pathway amino-acid biosynthesis; L-leucine biosynthesis; L-leucine from 3-methyl-2-oxobutanoate: step 1/4. Catalyzes the condensation of the acetyl group of acetyl-CoA with 3-methyl-2-oxobutanoate (2-ketoisovalerate) to form 3-carboxy-3-hydroxy-4-methylpentanoate (2-isopropylmalate). In Methylorubrum populi (strain ATCC BAA-705 / NCIMB 13946 / BJ001) (Methylobacterium populi), this protein is 2-isopropylmalate synthase.